Here is a 180-residue protein sequence, read N- to C-terminus: NADH-quinone oxidoreductase subunit I (180 aa).

2 consecutive 4Fe-4S ferredoxin-type domains span residues 48–80 and 90–119; these read IVLT…LQKA and EFFR…LTPD. Residues cysteine 60, cysteine 63, cysteine 66, cysteine 70, cysteine 99, cysteine 102, cysteine 105, and cysteine 109 each contribute to the [4Fe-4S] cluster site.

It belongs to the complex I 23 kDa subunit family. NDH-1 is composed of 13 different subunits. Subunits NuoA, H, J, K, L, M, N constitute the membrane sector of the complex. It depends on [4Fe-4S] cluster as a cofactor.

It is found in the cell inner membrane. It carries out the reaction a quinone + NADH + 5 H(+)(in) = a quinol + NAD(+) + 4 H(+)(out). NDH-1 shuttles electrons from NADH, via FMN and iron-sulfur (Fe-S) centers, to quinones in the respiratory chain. The immediate electron acceptor for the enzyme in this species is believed to be ubiquinone. Couples the redox reaction to proton translocation (for every two electrons transferred, four hydrogen ions are translocated across the cytoplasmic membrane), and thus conserves the redox energy in a proton gradient. The sequence is that of NADH-quinone oxidoreductase subunit I from Cronobacter sakazakii (strain ATCC BAA-894) (Enterobacter sakazakii).